Reading from the N-terminus, the 358-residue chain is Serine/threonine-protein phosphatase 2A activator 2 (358 aa).

In terms of assembly, interacts with the phosphatase PP2A catalytic subunits PPH21 and PPH22. Forms a ternary complex with PPH21-TAP42.

The protein localises to the cytoplasm. It carries out the reaction [protein]-peptidylproline (omega=180) = [protein]-peptidylproline (omega=0). PPIases accelerate the folding of proteins. It catalyzes the cis-trans isomerization of proline imidic peptide bonds in oligopeptides. Acts as a regulatory subunit for TAP42-associated PP2A-like phosphatases modulating their activity or substrate specificity, probably by inducing a conformational change in the catalytic subunit, a direct target of the PPIase. Can reactivate inactive phosphatase PP2A-phosphatase methylesterase complexes (PP2Ai) in presence of ATP and Mg(2+) by dissociating the inactive form from the complex. Acts also inhibitory at high concentrations. Involved in the regulation of cell cycle progression, mitotic spindle formation and bud morphogenesis. This is Serine/threonine-protein phosphatase 2A activator 2 (RRD2) from Saccharomyces cerevisiae (strain ATCC 204508 / S288c) (Baker's yeast).